Reading from the N-terminus, the 150-residue chain is 3-hydroxyacyl-[acyl-carrier-protein] dehydratase FabZ (150 aa).

Histidine 56 is an active-site residue.

The protein belongs to the thioester dehydratase family. FabZ subfamily.

The protein localises to the cytoplasm. The catalysed reaction is a (3R)-hydroxyacyl-[ACP] = a (2E)-enoyl-[ACP] + H2O. Its function is as follows. Involved in unsaturated fatty acids biosynthesis. Catalyzes the dehydration of short chain beta-hydroxyacyl-ACPs and long chain saturated and unsaturated beta-hydroxyacyl-ACPs. The chain is 3-hydroxyacyl-[acyl-carrier-protein] dehydratase FabZ from Desulfotalea psychrophila (strain LSv54 / DSM 12343).